The primary structure comprises 248 residues: Leucyl/phenylalanyl-tRNA--protein transferase (248 aa).

Belongs to the L/F-transferase family.

The protein resides in the cytoplasm. It catalyses the reaction N-terminal L-lysyl-[protein] + L-leucyl-tRNA(Leu) = N-terminal L-leucyl-L-lysyl-[protein] + tRNA(Leu) + H(+). The catalysed reaction is N-terminal L-arginyl-[protein] + L-leucyl-tRNA(Leu) = N-terminal L-leucyl-L-arginyl-[protein] + tRNA(Leu) + H(+). The enzyme catalyses L-phenylalanyl-tRNA(Phe) + an N-terminal L-alpha-aminoacyl-[protein] = an N-terminal L-phenylalanyl-L-alpha-aminoacyl-[protein] + tRNA(Phe). Functions in the N-end rule pathway of protein degradation where it conjugates Leu, Phe and, less efficiently, Met from aminoacyl-tRNAs to the N-termini of proteins containing an N-terminal arginine or lysine. In Oleidesulfovibrio alaskensis (strain ATCC BAA-1058 / DSM 17464 / G20) (Desulfovibrio alaskensis), this protein is Leucyl/phenylalanyl-tRNA--protein transferase.